Consider the following 492-residue polypeptide: Catalase isozyme 2 (492 aa).

Catalysis depends on residues histidine 65 and asparagine 138. Position 348 (tyrosine 348) interacts with heme.

The protein belongs to the catalase family. Homotetramer. Heme is required as a cofactor.

It localises to the peroxisome. The enzyme catalyses 2 H2O2 = O2 + 2 H2O. Occurs in almost all aerobically respiring organisms and serves to protect cells from the toxic effects of hydrogen peroxide. The polypeptide is Catalase isozyme 2 (CAT2) (Nicotiana plumbaginifolia (Leadwort-leaved tobacco)).